Here is a 310-residue protein sequence, read N- to C-terminus: uncharacterized protein (310 aa).

Disordered regions lie at residues 1–53 (MSNK…NKEM), 78–127 (PIEN…TITN), and 153–217 (QQPL…SQML). A compositionally biased stretch (acidic residues) spans 11–25 (GEEDEEEDDLYDDYD). 2 stretches are compositionally biased toward polar residues: residues 37 to 49 (STSM…NISL) and 78 to 88 (PIENINENPSP). Low complexity-rich tracts occupy residues 94–126 (QTQQ…TTIT), 164–184 (PSPI…QYIT), and 192–208 (YQPI…QIPT). Residues 268-299 (DLIKSVQHNIRQYNDDILTLEEKLEQTEWSLQ) are a coiled coil.

This is an uncharacterized protein from Dictyostelium discoideum (Social amoeba).